Reading from the N-terminus, the 282-residue chain is MINAKTKVIGLIGHPVEHSFSPIMHNAAFKDKGLNYVYVAFDVLPENLKYVIDGAKALGIVGFNVTIPHKIEIMKYLDEIDKDAQLIGAVNTIKIEDGKAIGYNTDGIGARMALEEEIGRVKDKNIVIYGAGGAARAVAFELAKDNNIIIANRTVEKAEALAKEIAEKLNKKFGEEVKFSGLDVDLDGVDIIINATPIGMYPNIDVEPIVKAEKLREDMVVMDLIYNPLETVLLKEAKKVNAKTINGLGMLIYQGAVAFKIWTGVEPNIEVMKNAIIDKITK.

Residues 19-21 (SFS) and T66 contribute to the shikimate site. K70 functions as the Proton acceptor in the catalytic mechanism. The shikimate site is built by N91 and D106. NADP(+) is bound by residues 130–134 (GAGGA), 152–157 (NRTVEK), T196, M200, and L224. Y226 lines the shikimate pocket. An NADP(+)-binding site is contributed by G247.

It belongs to the shikimate dehydrogenase family. Homodimer.

It catalyses the reaction shikimate + NADP(+) = 3-dehydroshikimate + NADPH + H(+). Its pathway is metabolic intermediate biosynthesis; chorismate biosynthesis; chorismate from D-erythrose 4-phosphate and phosphoenolpyruvate: step 4/7. Its function is as follows. Involved in the biosynthesis of the chorismate, which leads to the biosynthesis of aromatic amino acids. Catalyzes the reversible NADPH linked reduction of 3-dehydroshikimate (DHSA) to yield shikimate (SA). In Methanocaldococcus jannaschii (strain ATCC 43067 / DSM 2661 / JAL-1 / JCM 10045 / NBRC 100440) (Methanococcus jannaschii), this protein is Shikimate dehydrogenase (NADP(+)).